The primary structure comprises 117 residues: Large ribosomal subunit protein uL18 (117 aa).

It belongs to the universal ribosomal protein uL18 family. Part of the 50S ribosomal subunit; part of the 5S rRNA/L5/L18/L25 subcomplex. Contacts the 5S and 23S rRNAs.

In terms of biological role, this is one of the proteins that bind and probably mediate the attachment of the 5S RNA into the large ribosomal subunit, where it forms part of the central protuberance. The polypeptide is Large ribosomal subunit protein uL18 (Aster yellows witches'-broom phytoplasma (strain AYWB)).